We begin with the raw amino-acid sequence, 47 residues long: Photosystem II reaction center protein K (47 aa).

Residues 1 to 10 constitute a propeptide that is removed on maturation; the sequence is MAPLTLDLLA. The helical transmembrane segment at 26 to 46 threads the bilayer; sequence LPLIPLLFFLLVFVWQAAVGF.

Belongs to the PsbK family. In terms of assembly, PSII is composed of 1 copy each of membrane proteins PsbA, PsbB, PsbC, PsbD, PsbE, PsbF, PsbH, PsbI, PsbJ, PsbK, PsbL, PsbM, PsbT, PsbX, PsbY, Psb30/Ycf12, peripheral proteins PsbO, CyanoQ (PsbQ), PsbU, PsbV and a large number of cofactors. It forms dimeric complexes.

The protein resides in the cellular thylakoid membrane. Its function is as follows. One of the components of the core complex of photosystem II (PSII). PSII is a light-driven water:plastoquinone oxidoreductase that uses light energy to abstract electrons from H(2)O, generating O(2) and a proton gradient subsequently used for ATP formation. It consists of a core antenna complex that captures photons, and an electron transfer chain that converts photonic excitation into a charge separation. In Prochlorococcus marinus (strain SARG / CCMP1375 / SS120), this protein is Photosystem II reaction center protein K.